We begin with the raw amino-acid sequence, 314 residues long: Thymidylate synthase (314 aa).

DUMP contacts are provided by residues Arg32 and 176-177; that span reads RR. Cys196 (nucleophile) is an active-site residue. DUMP-binding positions include 216–219, Asn227, and 257–259; these read RSCD and HLY. Asp219 lines the (6R)-5,10-methylene-5,6,7,8-tetrahydrofolate pocket. (6R)-5,10-methylene-5,6,7,8-tetrahydrofolate is bound at residue Ala313.

This sequence belongs to the thymidylate synthase family. Bacterial-type ThyA subfamily. As to quaternary structure, homodimer.

It is found in the cytoplasm. The catalysed reaction is dUMP + (6R)-5,10-methylene-5,6,7,8-tetrahydrofolate = 7,8-dihydrofolate + dTMP. It functions in the pathway pyrimidine metabolism; dTTP biosynthesis. In terms of biological role, catalyzes the reductive methylation of 2'-deoxyuridine-5'-monophosphate (dUMP) to 2'-deoxythymidine-5'-monophosphate (dTMP) while utilizing 5,10-methylenetetrahydrofolate (mTHF) as the methyl donor and reductant in the reaction, yielding dihydrofolate (DHF) as a by-product. This enzymatic reaction provides an intracellular de novo source of dTMP, an essential precursor for DNA biosynthesis. The polypeptide is Thymidylate synthase (Novosphingobium aromaticivorans (strain ATCC 700278 / DSM 12444 / CCUG 56034 / CIP 105152 / NBRC 16084 / F199)).